Consider the following 447-residue polypeptide: Putative branched-chain amino acid carrier protein SAUSA300_1300 (447 aa).

12 helical membrane-spanning segments follow: residues 6–26, 40–60, 74–94, 114–134, 143–163, 193–213, 229–249, 290–310, 326–346, 350–370, 382–402, and 417–437; these read WVIG…IFPP, ILAF…VGAL, PKFS…LFAI, SSIA…YICL, IGSL…IKGY, GYLT…VNAV, LTAG…LGYI, LLGI…IVAV, FVLV…NAVI, IPVL…ILIA, IPVI…LGWL, and LEWF…GIFV.

The protein belongs to the branched chain amino acid transporter family.

It localises to the cell membrane. Functionally, component of the transport system for branched-chain amino acids (leucine, isoleucine and valine), which is coupled to a proton motive force (Potential). Contributes to NaCl tolerance. This Staphylococcus aureus (strain USA300) protein is Putative branched-chain amino acid carrier protein SAUSA300_1300.